The following is a 482-amino-acid chain: tRNA sulfurtransferase (482 aa).

In terms of domain architecture, THUMP spans 61 to 165; sequence LAIRDALTRI…DDRLLLIKGR (105 aa). Residues 183 to 184, lysine 265, glycine 287, and glutamine 296 each bind ATP; that span reads LI. Residues cysteine 344 and cysteine 456 are joined by a disulfide bond. A Rhodanese domain is found at 404–482; it reads FGPNDVILDI…GFNNVKVYRP (79 aa). Cysteine 456 (cysteine persulfide intermediate) is an active-site residue.

It belongs to the ThiI family.

Its subcellular location is the cytoplasm. It catalyses the reaction [ThiI sulfur-carrier protein]-S-sulfanyl-L-cysteine + a uridine in tRNA + 2 reduced [2Fe-2S]-[ferredoxin] + ATP + H(+) = [ThiI sulfur-carrier protein]-L-cysteine + a 4-thiouridine in tRNA + 2 oxidized [2Fe-2S]-[ferredoxin] + AMP + diphosphate. It carries out the reaction [ThiS sulfur-carrier protein]-C-terminal Gly-Gly-AMP + S-sulfanyl-L-cysteinyl-[cysteine desulfurase] + AH2 = [ThiS sulfur-carrier protein]-C-terminal-Gly-aminoethanethioate + L-cysteinyl-[cysteine desulfurase] + A + AMP + 2 H(+). It participates in cofactor biosynthesis; thiamine diphosphate biosynthesis. In terms of biological role, catalyzes the ATP-dependent transfer of a sulfur to tRNA to produce 4-thiouridine in position 8 of tRNAs, which functions as a near-UV photosensor. Also catalyzes the transfer of sulfur to the sulfur carrier protein ThiS, forming ThiS-thiocarboxylate. This is a step in the synthesis of thiazole, in the thiamine biosynthesis pathway. The sulfur is donated as persulfide by IscS. The protein is tRNA sulfurtransferase of Shigella sonnei (strain Ss046).